We begin with the raw amino-acid sequence, 746 residues long: Root phototropism protein 3 (746 aa).

Residues 1 to 24 form a disordered region; sequence MMWESESDGGVGVGGGGGREYGDG. Over residues 9-19 the composition is skewed to gly residues; the sequence is GGVGVGGGGGR. The 69-residue stretch at 54–122 folds into the BTB domain; sequence SDLLVKIGDM…CYGVPVDLTA (69 aa). The region spanning 250-605 is the NPH3 domain; the sequence is DWWFEDVSIL…VQVLFSEQVK (356 aa). Positions 461–500 are disordered; it reads EQTEGSSPSRMSPSPSQSMYADIPRGNNNNGGGGGGNNQN. A compositionally biased stretch (low complexity) spans 466-478; sequence SSPSRMSPSPSQS. Tyr-546 is modified (phosphotyrosine). Positions 708–746 are disordered; it reads SKLTKMSGQESHDISSGGEQAGVDHPPPRKPRRWRNSIS. A compositionally biased stretch (basic residues) spans 735-746; sequence PRKPRRWRNSIS.

The protein belongs to the NPH3 family. As to quaternary structure, interacts with PKS1, PKS2, RPT2, PHOT1 and PHOT2. Subunit of a complex made of CAR6, PHOT1 and RPT3/NPH3. Phosphorylated in the dark. As to expression, expressed in hypocotyls, guard cells and mesophyll cells.

Its subcellular location is the cell membrane. Its pathway is protein modification; protein ubiquitination. In terms of biological role, may act as a substrate-specific adapter of an E3 ubiquitin-protein ligase complex (CUL3-RBX1-BTB) which mediates the ubiquitination and subsequent proteasomal degradation of target proteins. Signal transducer of the phototropic response and photo-induced movements. Involved in the phot1 pathway under low blue light (LBL) fluence rate and in the phot2 pathway under higher fluence rate of blue light (HBL). Necessary for root and hypocotyl phototropisms, but not for the regulation of stomata opening. Not involved in chloroplast accumulation and translocation. The polypeptide is Root phototropism protein 3 (RPT3) (Arabidopsis thaliana (Mouse-ear cress)).